Reading from the N-terminus, the 343-residue chain is Phosphate acyltransferase (343 aa).

Belongs to the PlsX family. Homodimer. Probably interacts with PlsY.

The protein resides in the cytoplasm. It catalyses the reaction a fatty acyl-[ACP] + phosphate = an acyl phosphate + holo-[ACP]. It functions in the pathway lipid metabolism; phospholipid metabolism. Functionally, catalyzes the reversible formation of acyl-phosphate (acyl-PO(4)) from acyl-[acyl-carrier-protein] (acyl-ACP). This enzyme utilizes acyl-ACP as fatty acyl donor, but not acyl-CoA. The sequence is that of Phosphate acyltransferase from Coxiella burnetii (strain RSA 331 / Henzerling II).